A 1451-amino-acid polypeptide reads, in one-letter code: Copper-transporting ATPase 2 (1451 aa).

Residues 1–646 (MPEQERKVTA…KTEIKQWKKS (646 aa)) are Cytoplasmic-facing. HMA domains lie at 57–123 (TTGV…FEAS), 142–208 (AVVK…FEAA), and 256–322 (ATLP…PGYF). The Cu(+) site is built by cysteine 68, cysteine 71, cysteine 153, cysteine 156, cysteine 267, and cysteine 270. The interval 328-353 (DGLEKESGSSSVPSLGSSQRQQEPGP) is disordered. Low complexity predominate over residues 335–345 (GSSSVPSLGSS). The 67-residue stretch at 355–421 (RTAVLTITGI…AVEDMGFEVS (67 aa)) folds into the HMA 4 domain. Phosphoserine occurs at positions 469, 471, and 474. 2 HMA domains span residues 481 to 547 (QKCF…FEAA) and 557 to 623 (GDIE…FHAS). Cysteine 492, cysteine 495, cysteine 568, and cysteine 571 together coordinate Cu(+). Residues 647 to 668 (FLCSLVFGIPVMGLMIYMLIPS) form a helical membrane-spanning segment. Over 669–690 (SKPHETMVLDHNIIPGLSVLNL) the chain is Extracellular. The chain crosses the membrane as a helical span at residues 691-710 (IFFILCTFVQFLGGWYFYVQ). The Cytoplasmic segment spans residues 711 to 717 (AYKSLRH). A helical transmembrane segment spans residues 718 to 738 (KSANMDVLIVLATTIAYAYSL). Topologically, residues 739–757 (VILVVAIAEKAEKSPVTFF) are extracellular. A helical membrane pass occupies residues 758–778 (DTPPMLFVFIALGRWLEHVAK). At 779–912 (SKTSEALAKL…KAPIQQLADR (134 aa)) the chain is on the cytoplasmic side. A helical membrane pass occupies residues 913–935 (FSGYFVPFIIIISTLTLVVWIII). Residues 936-965 (GFVDFGIVQKYFPSPSKHISQTEVIIRFAF) are Extracellular-facing. Residues 966–987 (QTSITVLCIACPCSLGLATPTA) form a helical membrane-spanning segment. At 988-1310 (VMVGTGVAAQ…LSKRTVRRIR (323 aa)) the chain is on the cytoplasmic side. The active-site 4-aspartylphosphate intermediate is the aspartate 1020. Residues aspartate 1255 and aspartate 1259 each contribute to the Mg(2+) site. A helical transmembrane segment spans residues 1311–1328 (VNLVLALIYNMVGIPIAA). At 1329–1339 (GVFMPIGIVLQ) the chain is on the extracellular side. Residues 1340-1357 (PWMGSAAASSVSVVLSSL) traverse the membrane as a helical segment. Over 1358-1451 (QLKCYRKPDL…LSDRDEEQCI (94 aa)) the chain is Cytoplasmic. Serine 1384 and serine 1443 each carry phosphoserine.

Belongs to the cation transport ATPase (P-type) (TC 3.A.3) family. Type IB subfamily. Monomer. Interacts with COMMD1/MURR1. Interacts with DCTN4, in a copper-dependent manner. Interacts with ATOX1. Interacts (via C-terminus) with ZBTB16/PLZF. As to expression, expressed in brain, liver, kidney, spleen and stomach. In brain, detected in neuronal cells of the hippocampal formation, olfactory bulbs, cerebellum, cerebral cortex and nuclei in the brainstem. Isoform PINA is expressed during night in adult pineal gland (pinealocytes) and retina. Isoform PINA is not detected in other tissue.

It is found in the golgi apparatus. It localises to the trans-Golgi network membrane. Its subcellular location is the late endosome. It carries out the reaction Cu(+)(in) + ATP + H2O = Cu(+)(out) + ADP + phosphate + H(+). Copper ion transmembrane transporter involved in the export of copper out of the cells, such as the efflux of hepatic copper into the bile. In Rattus norvegicus (Rat), this protein is Copper-transporting ATPase 2 (Atp7b).